The sequence spans 321 residues: Tyrosine recombinase XerC (321 aa).

Residues 16–107 (SDIGQQIVRW…GLRSFARFLE (92 aa)) enclose the Core-binding (CB) domain. The region spanning 128-315 (SVPKPIHMSA…DSERLLDVYR (188 aa)) is the Tyr recombinase domain. Residues Arg173, Lys199, His267, Arg270, and His293 contribute to the active site. Tyr302 (O-(3'-phospho-DNA)-tyrosine intermediate) is an active-site residue.

It belongs to the 'phage' integrase family. XerC subfamily. In terms of assembly, forms a cyclic heterotetrameric complex composed of two molecules of XerC and two molecules of XerD.

It localises to the cytoplasm. Functionally, site-specific tyrosine recombinase, which acts by catalyzing the cutting and rejoining of the recombining DNA molecules. The XerC-XerD complex is essential to convert dimers of the bacterial chromosome into monomers to permit their segregation at cell division. It also contributes to the segregational stability of plasmids. The polypeptide is Tyrosine recombinase XerC (Nitrobacter winogradskyi (strain ATCC 25391 / DSM 10237 / CIP 104748 / NCIMB 11846 / Nb-255)).